Consider the following 65-residue polypeptide: Large ribosomal subunit protein bL35 (65 aa).

It belongs to the bacterial ribosomal protein bL35 family.

In Agathobacter rectalis (strain ATCC 33656 / DSM 3377 / JCM 17463 / KCTC 5835 / VPI 0990) (Eubacterium rectale), this protein is Large ribosomal subunit protein bL35.